The chain runs to 285 residues: 2-dehydro-3-deoxyphosphooctonate aldolase (285 aa).

The protein belongs to the KdsA family.

It is found in the cytoplasm. The catalysed reaction is D-arabinose 5-phosphate + phosphoenolpyruvate + H2O = 3-deoxy-alpha-D-manno-2-octulosonate-8-phosphate + phosphate. Its pathway is carbohydrate biosynthesis; 3-deoxy-D-manno-octulosonate biosynthesis; 3-deoxy-D-manno-octulosonate from D-ribulose 5-phosphate: step 2/3. It functions in the pathway bacterial outer membrane biogenesis; lipopolysaccharide biosynthesis. In Bordetella bronchiseptica (strain ATCC BAA-588 / NCTC 13252 / RB50) (Alcaligenes bronchisepticus), this protein is 2-dehydro-3-deoxyphosphooctonate aldolase.